Reading from the N-terminus, the 391-residue chain is 3-ketoacyl-CoA thiolase (391 aa).

Cysteine 95 (acyl-thioester intermediate) is an active-site residue. Residues histidine 347 and cysteine 377 each act as proton acceptor in the active site.

Belongs to the thiolase-like superfamily. Thiolase family. In terms of assembly, heterotetramer of two alpha chains (FadB) and two beta chains (FadA).

It is found in the cytoplasm. The catalysed reaction is an acyl-CoA + acetyl-CoA = a 3-oxoacyl-CoA + CoA. It functions in the pathway lipid metabolism; fatty acid beta-oxidation. In terms of biological role, catalyzes the final step of fatty acid oxidation in which acetyl-CoA is released and the CoA ester of a fatty acid two carbons shorter is formed. This chain is 3-ketoacyl-CoA thiolase, found in Pseudomonas putida (strain ATCC 700007 / DSM 6899 / JCM 31910 / BCRC 17059 / LMG 24140 / F1).